A 798-amino-acid chain; its full sequence is Integrin beta-7 (798 aa).

Residues 1–19 (MVALPMVLVLLLVLSRGES) form the signal peptide. Residues 20-723 (ELDAKIPSTG…VRPQEKGADH (704 aa)) lie on the Extracellular side of the membrane. Residues 44-92 (SCQPAPSCQKCILSHPSCAWCKQLNFTASGEAEARRCARREELLARGCP) enclose the PSI domain. Disulfide bonds link C51–C476, C54–C80, C64–C91, C216–C223, C271–C311, C412–C428, and C448–C474. N-linked (GlcNAc...) asparagine glycosylation occurs at N68. Residues 98 to 124 (EPRGQQEVLQDQPLSQGARGEGATQLA) are disordered. A VWFA domain is found at 150–389 (YPVDLYYLMD…QLIMDAYNSL (240 aa)). The Mg(2+) site is built by S161 and S163. The Ca(2+) site is built by S163, D166, D167, and D198. N254, D256, P258, and E259 together coordinate Ca(2+). E259 provides a ligand contact to Mg(2+). A glycan (N-linked (GlcNAc...) asparagine) is linked at N279. Positions 289 and 373 each coordinate Ca(2+). An N-linked (GlcNAc...) asparagine glycan is attached at N434. N477 is a glycosylation site (N-linked (GlcNAc...) asparagine). Disulfide bonds link C478–C497, C488–C500, C502–C511, C513–C545, C527–C543, C537–C548, C550–C559, C561–C582, C566–C580, C574–C585, C587–C596, C598–C621, C605–C619, C613–C624, C626–C635, C638–C641, C645–C688, C651–C670, and C654–C666. I-EGF domains lie at 478 to 512 (CSDT…RLCE), 513 to 560 (CSVA…HLCE), 561 to 597 (CDDA…RACE), and 598 to 636 (CSGD…ALCD). N531 carries N-linked (GlcNAc...) asparagine glycosylation. An N-linked (GlcNAc...) asparagine glycan is attached at N590. N-linked (GlcNAc...) asparagine glycosylation is found at N665 and N674. The helical transmembrane segment at 724 to 746 (TQAIVLGCVGGIVAVGLGLVLAY) threads the bilayer. Residues 747 to 798 (RLSVEIYDRREYSRFEKEQQQLNWKQDSNPLYKSAITTTINPRFQEADSPTL) are Cytoplasmic-facing. Position 778 is a phosphotyrosine; by Tyr-kinases (Y778).

This sequence belongs to the integrin beta chain family. In terms of assembly, heterodimer of an alpha and a beta subunit. ITGB7/beta-7 associates with either ITGA4/alpha-4 or ITGAE/alpha-E. Integrin ITGA4/ITGB7 interacts with MADCAM1. Integrin ITGA4/ITGB7 interacts with VCAM1 and fibronectin. Interacts with FLNA (via filamin repeats 4, 9, 12, 17, 19, 21, and 23). As to quaternary structure, (Microbial infection) May interact with HIV-1 gp120. Expressed in a variety of leukocyte lines.

The protein resides in the cell membrane. Integrin ITGA4/ITGB7 (alpha-4/beta-7) (Peyer patches-specific homing receptor LPAM-1) is an adhesion molecule that mediates lymphocyte migration and homing to gut-associated lymphoid tissue (GALT). Integrin ITGA4/ITGB7 interacts with the cell surface adhesion molecules MADCAM1 which is normally expressed by the vascular endothelium of the gastrointestinal tract. Also interacts with VCAM1 and fibronectin, an extracellular matrix component. It recognizes one or more domains within the alternatively spliced CS-1 region of fibronectin. Interactions involve the tripeptide L-D-T in MADCAM1, and L-D-V in fibronectin. Integrin ITGAE/ITGB7 (alpha-E/beta-7, HML-1) is a receptor for E-cadherin. Its function is as follows. (Microbial infection) Binds to HIV-1 gp120, thereby allowing the virus to enter GALT, which is thought to be the major trigger of AIDS disease. Interaction would involve a tripeptide L-D-I in HIV-1 gp120. The polypeptide is Integrin beta-7 (ITGB7) (Homo sapiens (Human)).